The following is a 220-amino-acid chain: Large ribosomal subunit protein uL3 (220 aa).

Belongs to the universal ribosomal protein uL3 family. Part of the 50S ribosomal subunit. Forms a cluster with proteins L14 and L19.

One of the primary rRNA binding proteins, it binds directly near the 3'-end of the 23S rRNA, where it nucleates assembly of the 50S subunit. This Staphylococcus haemolyticus (strain JCSC1435) protein is Large ribosomal subunit protein uL3.